We begin with the raw amino-acid sequence, 295 residues long: Bifunctional protein FolD (295 aa).

Residues 166 to 168 (GRS), S195, and I236 each bind NADP(+).

It belongs to the tetrahydrofolate dehydrogenase/cyclohydrolase family. In terms of assembly, homodimer.

The catalysed reaction is (6R)-5,10-methylene-5,6,7,8-tetrahydrofolate + NADP(+) = (6R)-5,10-methenyltetrahydrofolate + NADPH. It carries out the reaction (6R)-5,10-methenyltetrahydrofolate + H2O = (6R)-10-formyltetrahydrofolate + H(+). It participates in one-carbon metabolism; tetrahydrofolate interconversion. In terms of biological role, catalyzes the oxidation of 5,10-methylenetetrahydrofolate to 5,10-methenyltetrahydrofolate and then the hydrolysis of 5,10-methenyltetrahydrofolate to 10-formyltetrahydrofolate. The protein is Bifunctional protein FolD of Chlorobium phaeovibrioides (strain DSM 265 / 1930) (Prosthecochloris vibrioformis (strain DSM 265)).